We begin with the raw amino-acid sequence, 349 residues long: D-alanine--D-alanine ligase (349 aa).

The ATP-grasp domain occupies 132 to 335 (KHVFEAVGVP…YSDLIEKLVD (204 aa)). 162-217 (VEKLEFPVFVKPANMGSSVGISKVDDLADLQPALSEAYKYDNRVVIEQGVDAREIE) serves as a coordination point for ATP. 3 residues coordinate Mg(2+): Asp289, Glu302, and Asn304.

It belongs to the D-alanine--D-alanine ligase family. Mg(2+) serves as cofactor. The cofactor is Mn(2+).

The protein localises to the cytoplasm. It catalyses the reaction 2 D-alanine + ATP = D-alanyl-D-alanine + ADP + phosphate + H(+). It functions in the pathway cell wall biogenesis; peptidoglycan biosynthesis. In terms of biological role, cell wall formation. The protein is D-alanine--D-alanine ligase of Lactococcus lactis subsp. lactis (strain IL1403) (Streptococcus lactis).